The following is an 83-amino-acid chain: Toxin To15 (83 aa).

Positions 1–19 are cleaved as a signal peptide; that stretch reads MKGIILLISCLMLIEVVVG. The 62-residue stretch at 21-82 folds into the LCN-type CS-alpha/beta domain; it reads KEGYPLDSSG…IWNAKTNKCY (62 aa). Intrachain disulfides connect Cys31–Cys81, Cys35–Cys57, Cys43–Cys62, and Cys47–Cys64.

Belongs to the long (4 C-C) scorpion toxin superfamily. Sodium channel inhibitor family. Beta subfamily. In terms of tissue distribution, expressed by the venom gland.

It is found in the secreted. Functionally, beta toxins bind voltage-independently at site-4 of sodium channels (Nav) and shift the voltage of activation toward more negative potentials thereby affecting sodium channel activation and promoting spontaneous and repetitive firing. The chain is Toxin To15 from Tityus obscurus (Amazonian scorpion).